A 423-amino-acid polypeptide reads, in one-letter code: Site-specific recombinase Flp (423 aa).

One can recognise a Tyr recombinase Flp-type domain in the interval 136–422 (GNSHSKKMLK…DYLSSYINRR (287 aa)). The O-(3'-phospho-DNA)-tyrosine intermediate role is filled by tyrosine 343.

The protein belongs to the 'phage' integrase family. As to quaternary structure, homotetramer.

Part of the plasmid amplification system, which corrects any decrease in copy number caused by a rare missegregation event. Catalyzes the recombination between the large inverted repetitions of the 2-micron plasmid during plasmid replication. This recombination event changes the direction of one of the two replication forks in the bidirectionally replicating molecule, effectively resulting in multiple rounds of replication from a single initiation event. Binds specifically to the FLP recognition target (FRT) site where it induces DNA to bend. Three types of bend exist. Type I is approximately 60 degrees and results from 1 FLP molecule binding to 1 symmetry element. Type II is &gt;144 degrees and results from FLP molecules binding to symmetry elements a and b. Type III is approximately 65 degrees and results from FLP molecules binding to symmetry elements b and c. This is Site-specific recombinase Flp (FLP1) from Saccharomyces cerevisiae (strain ATCC 204508 / S288c) (Baker's yeast).